The following is a 248-amino-acid chain: Probable septum site-determining protein MinC (248 aa).

Residues 115–144 are disordered; that stretch reads PTAVSPPPPPPPPARAEPAPPAARPAPGRM. Pro residues predominate over residues 118–138; the sequence is VSPPPPPPPPARAEPAPPAAR.

Belongs to the MinC family. In terms of assembly, interacts with MinD and FtsZ.

Cell division inhibitor that blocks the formation of polar Z ring septums. Rapidly oscillates between the poles of the cell to destabilize FtsZ filaments that have formed before they mature into polar Z rings. Prevents FtsZ polymerization. In Xanthomonas euvesicatoria pv. vesicatoria (strain 85-10) (Xanthomonas campestris pv. vesicatoria), this protein is Probable septum site-determining protein MinC.